Reading from the N-terminus, the 540-residue chain is Chaperonin GroEL 3 (540 aa).

ATP contacts are provided by residues 30–33 (TLGP), lysine 51, 87–91 (DGTTT), glycine 415, 479–481 (NAA), and aspartate 495.

This sequence belongs to the chaperonin (HSP60) family. As to quaternary structure, forms a cylinder of 14 subunits composed of two heptameric rings stacked back-to-back. Interacts with the co-chaperonin GroES.

The protein localises to the cytoplasm. The enzyme catalyses ATP + H2O + a folded polypeptide = ADP + phosphate + an unfolded polypeptide.. In terms of biological role, together with its co-chaperonin GroES, plays an essential role in assisting protein folding. The GroEL-GroES system forms a nano-cage that allows encapsulation of the non-native substrate proteins and provides a physical environment optimized to promote and accelerate protein folding. The chain is Chaperonin GroEL 3 from Burkholderia cenocepacia (strain HI2424).